We begin with the raw amino-acid sequence, 227 residues long: Lipoprotein-releasing system ATP-binding protein LolD (227 aa).

Positions 7–227 constitute an ABC transporter domain; the sequence is LSCRDLGKSY…HLQEGHLVAI (221 aa). 43-50 contacts ATP; it reads GTSGSGKS.

Belongs to the ABC transporter superfamily. Lipoprotein translocase (TC 3.A.1.125) family. As to quaternary structure, the complex is composed of two ATP-binding proteins (LolD) and two transmembrane proteins (LolC and LolE).

It is found in the cell inner membrane. In terms of biological role, part of the ABC transporter complex LolCDE involved in the translocation of mature outer membrane-directed lipoproteins, from the inner membrane to the periplasmic chaperone, LolA. Responsible for the formation of the LolA-lipoprotein complex in an ATP-dependent manner. The sequence is that of Lipoprotein-releasing system ATP-binding protein LolD from Pseudomonas fluorescens (strain ATCC BAA-477 / NRRL B-23932 / Pf-5).